Here is a 327-residue protein sequence, read N- to C-terminus: NF-kappa-B inhibitor delta (327 aa).

The tract at residues 1-40 (MEDSLDTRLYPEPSLSQVGSWRVSSLPSGSPQLPSPTGPS) is disordered. Positions 14–23 (SLSQVGSWRV) are enriched in polar residues. ANK repeat units follow at residues 62–97 (EGDT…IREH), 98–127 (KGKT…EPNA), 131–160 (QGRS…QVDL), 166–215 (EGLT…SHTS), 220–250 (SNKT…DLRA), and 257–290 (HGNT…DPTL). Residues 293-327 (LENEQPVHLLRPGPGPEGLRQLLKRSRTAPPGLSS) form a disordered region.

It belongs to the NF-kappa-B inhibitor family. In terms of assembly, interacts with NFKB1, RELA and RELB; in the nucleus. As to expression, specifically expressed in spleen and at low levels in thymus. Expressed in a population of antigen-presenting dendritic cells which may act as regulators of systemic inflammatory response.

It is found in the nucleus. Its function is as follows. Regulates the expression of IL-2, IL-6, and other cytokines through regulation on NF-kappa-B activity. Functions in the regulation of inflammatory responses. Involved in the induction of T helper 17 cells (Th17) differentiation upon recognition of antigen by T cell antigen receptor (TCR). According to PubMed:11931770, it may also regulate TCR-induced negative selection of thymocytes. The chain is NF-kappa-B inhibitor delta (Nfkbid) from Mus musculus (Mouse).